The sequence spans 230 residues: MTALPQLISLLHLASPALPIGGFSYSQGLEAAIDCELVRDATTAERWIRDNLLHVQAQCEAPVWLLLHRAWQTQDHASVRQWNDWFHATRETSELRLETEQMGWSLAKLIAQMGWGDDASRDLLRDMRPVCLPTAFSSACVALGIAAREGLAAYLFNWAENQVAAAIKAVPLGQVAGQQMLLGLHQAVLGTVDEAVCRADAVPPLLSTFSPMLGVLSARHETQYSRLFRS.

The protein belongs to the UreF family. As to quaternary structure, ureD, UreF and UreG form a complex that acts as a GTP-hydrolysis-dependent molecular chaperone, activating the urease apoprotein by helping to assemble the nickel containing metallocenter of UreC. The UreE protein probably delivers the nickel.

It localises to the cytoplasm. Its function is as follows. Required for maturation of urease via the functional incorporation of the urease nickel metallocenter. This is Urease accessory protein UreF from Cupriavidus metallidurans (strain ATCC 43123 / DSM 2839 / NBRC 102507 / CH34) (Ralstonia metallidurans).